We begin with the raw amino-acid sequence, 530 residues long: Ubiquitin carboxyl-terminal hydrolase 17-like protein 22 (530 aa).

The region spanning Ala-80–Lys-375 is the USP domain. Catalysis depends on Cys-89, which acts as the Nucleophile. His-334 functions as the Proton acceptor in the catalytic mechanism. Basic and acidic residues-rich tracts occupy residues Ser-382 to Arg-392 and Asp-398 to His-412. 2 disordered regions span residues Ser-382–His-412 and Lys-476–Gln-530. Residues Ser-484–Thr-495 show a composition bias toward low complexity. Residues His-496–Leu-505 are compositionally biased toward polar residues. The span at Gly-510–Arg-524 shows a compositional bias: basic residues.

Belongs to the peptidase C19 family. USP17 subfamily.

It localises to the nucleus. It is found in the endoplasmic reticulum. The catalysed reaction is Thiol-dependent hydrolysis of ester, thioester, amide, peptide and isopeptide bonds formed by the C-terminal Gly of ubiquitin (a 76-residue protein attached to proteins as an intracellular targeting signal).. Functionally, deubiquitinating enzyme that removes conjugated ubiquitin from specific proteins to regulate different cellular processes that may include cell proliferation, progression through the cell cycle, apoptosis, cell migration, and the cellular response to viral infection. The chain is Ubiquitin carboxyl-terminal hydrolase 17-like protein 22 (USP17L22) from Homo sapiens (Human).